A 255-amino-acid polypeptide reads, in one-letter code: Flagellar L-ring protein (255 aa).

Residues 1-25 (MRRHSTRKTVARVAVVALAVGVLAG) form the signal peptide. Residue cysteine 26 is the site of N-palmitoyl cysteine attachment. Residue cysteine 26 is the site of S-diacylglycerol cysteine attachment.

This sequence belongs to the FlgH family. The basal body constitutes a major portion of the flagellar organelle and consists of four rings (L,P,S, and M) mounted on a central rod.

It localises to the cell outer membrane. Its subcellular location is the bacterial flagellum basal body. Assembles around the rod to form the L-ring and probably protects the motor/basal body from shearing forces during rotation. This is Flagellar L-ring protein from Rhodospirillum rubrum (strain ATCC 11170 / ATH 1.1.1 / DSM 467 / LMG 4362 / NCIMB 8255 / S1).